A 414-amino-acid chain; its full sequence is Transforming growth factor beta-2 proprotein (414 aa).

The N-terminal stretch at 1 to 20 (MHYCVLSAFLLLHLVTVALS) is a signal peptide. N-linked (GlcNAc...) asparagine glycosylation is found at N72, N140, and N241. Intrachain disulfides connect C309–C318, C317–C380, C346–C411, and C350–C413.

Belongs to the TGF-beta family. Interacts with the serine proteases, HTRA1 and HTRA3. Interacts with ASPN. Interacts with MFAP5. As to quaternary structure, interacts with Transforming growth factor beta-2 (TGF-beta-2) chain; interaction is non-covalent and maintains (TGF-beta-2) in a latent state. Interacts with LRRC32/GARP; leading to regulate activation of TGF-beta-2. Interacts with NREP; the interaction results in a decrease in TGFB2 autoinduction. In terms of assembly, transforming growth factor beta-2: Homodimer; disulfide-linked. Transforming growth factor beta-2: Interacts with TGF-beta receptors (TGFBR1 and TGFBR2), leading to signal transduction. In terms of processing, the precursor proprotein is cleaved in the Golgi apparatus to form Transforming growth factor beta-2 (TGF-beta-2) and Latency-associated peptide (LAP) chains, which remain non-covalently linked, rendering TGF-beta-2 inactive.

The protein resides in the secreted. The protein localises to the extracellular space. Its subcellular location is the extracellular matrix. Precursor of the Latency-associated peptide (LAP) and Transforming growth factor beta-2 (TGF-beta-2) chains, which constitute the regulatory and active subunit of TGF-beta-2, respectively. In terms of biological role, required to maintain the Transforming growth factor beta-2 (TGF-beta-2) chain in a latent state during storage in extracellular matrix. Associates non-covalently with TGF-beta-2 and regulates its activation via interaction with 'milieu molecules', such as LTBP1 and LRRC32/GARP, that control activation of TGF-beta-2. Its function is as follows. Multifunctional protein that regulates various processes such as angiogenesis and heart development. Activation into mature form follows different steps: following cleavage of the proprotein in the Golgi apparatus, Latency-associated peptide (LAP) and Transforming growth factor beta-2 (TGF-beta-2) chains remain non-covalently linked rendering TGF-beta-2 inactive during storage in extracellular matrix. At the same time, LAP chain interacts with 'milieu molecules', such as LTBP1 and LRRC32/GARP, that control activation of TGF-beta-2 and maintain it in a latent state during storage in extracellular milieus. Once activated following release of LAP, TGF-beta-2 acts by binding to TGF-beta receptors (TGFBR1 and TGFBR2), which transduce signal. The chain is Transforming growth factor beta-2 proprotein (TGFB2) from Bos taurus (Bovine).